The chain runs to 79 residues: UPF0291 protein SAV1341 (79 aa).

Residues 56–79 (IDPEGNDVTPEKIKEIQQKRDNKN) form a disordered region. Residues 64–79 (TPEKIKEIQQKRDNKN) show a composition bias toward basic and acidic residues.

Belongs to the UPF0291 family.

The protein resides in the cytoplasm. This chain is UPF0291 protein SAV1341, found in Staphylococcus aureus (strain Mu50 / ATCC 700699).